The primary structure comprises 155 residues: Non-secretory ribonuclease (155 aa).

The N-terminal stretch at 1–25 (MGPKLLESRLCLLLLLGLVLMLASC) is a signal peptide. Lys-33 contributes to the substrate binding site. His-38 serves as the catalytic Proton acceptor. N-linked (GlcNAc...) asparagine glycosylation is present at Asn-41. 4 cysteine pairs are disulfide-bonded: Cys-47-Cys-106, Cys-61-Cys-118, Cys-79-Cys-133, and Cys-86-Cys-94. Tyr-57 bears the 3'-nitrotyrosine mark. 62 to 66 (KDINT) provides a ligand contact to substrate. Asn-83, Asn-88, and Asn-107 each carry an N-linked (GlcNAc...) asparagine glycan. His-150 serves as the catalytic Proton donor.

The protein belongs to the pancreatic ribonuclease family. As to quaternary structure, interacts with and forms a tight 1:1 complex with RNH1. Dimerization of two such complexes may occur.

The protein resides in the lysosome. The protein localises to the cytoplasmic granule. The enzyme catalyses an [RNA] containing cytidine + H2O = an [RNA]-3'-cytidine-3'-phosphate + a 5'-hydroxy-ribonucleotide-3'-[RNA].. The catalysed reaction is an [RNA] containing uridine + H2O = an [RNA]-3'-uridine-3'-phosphate + a 5'-hydroxy-ribonucleotide-3'-[RNA].. Its function is as follows. This is a non-secretory ribonuclease. It is a pyrimidine specific nuclease with a slight preference for U. Cytotoxin and helminthotoxin. Possesses a wide variety of biological activities. The protein is Non-secretory ribonuclease (Rnase2) of Mus musculus (Mouse).